A 21-amino-acid chain; its full sequence is Misgurin (21 aa).

Residues 1 to 21 (RQRVEELSKFSKKGAAARRRK) are disordered. Residues 10-21 (FSKKGAAARRRK) show a composition bias toward basic residues.

The protein resides in the secreted. Functionally, strong antimicrobial activity against several Gram-positive and Gram-negative bacteria and fungi. The sequence is that of Misgurin from Misgurnus anguillicaudatus (Oriental weatherloach).